The sequence spans 286 residues: Bark leucoagglutinin (286 aa).

An N-terminal signal peptide occupies residues 1–28; it reads ATSNSKPTQVLLATFLTFFFLLLNNVNS. N-acetyl-alpha-neuraminyl-(2-&gt;3)-beta-D-galactosyl-(1-&gt;4)-beta-D-glucose is bound at residue Tyr73. Residue Asn89 is glycosylated (N-linked (GlcNAc...) asparagine). Residues Asp115 and Lys135 each coordinate N-acetyl-alpha-neuraminyl-(2-&gt;3)-beta-D-galactosyl-(1-&gt;4)-beta-D-glucose. N-linked (GlcNAc...) asparagine glycosylation occurs at Asn141. The Mn(2+) site is built by Glu155 and Asp157. Residues Asp157, Tyr159, Asp165, and Asp168 each coordinate Ca(2+). N-acetyl-alpha-neuraminyl-(2-&gt;3)-beta-D-galactosyl-(1-&gt;4)-beta-D-glucose is bound by residues Tyr159 and Asp165. 2 residues coordinate Mn(2+): Asp168 and His173. N-linked (GlcNAc...) asparagine glycans are attached at residues Asn207 and Asn219. Residues 278 to 286 constitute a propeptide, removed in mature form; the sequence is NVHIARYTA.

It belongs to the leguminous lectin family.

Sialic acid-binding lectin specifically recognizing the trisaccharide sequence Neu5Ac/Gc-alpha-2,3-Gal-beta-1,4-GlcNAc/Glc. This is Bark leucoagglutinin from Maackia amurensis (Amur maackia).